The following is a 655-amino-acid chain: MGRWAWVPSPWPPPGLGPFLLLLLLLLLLPRGFQPQPGGNRTESPEPNATATPAIPTILVTSVTSETPATSAPEAEGPQSGGLPPPPRAVPSSSSPQAQALTEDGRPCRFPFRYGGRMLHACTSEGSAHRKWCATTHNYDRDRAWGYCVEATPPPGGPAALDPCASGPCLNGGSCSNTQDPQSYHCSCPRAFTGKDCGTEKCFDETRYEYLEGGDRWARVRQGHVEQCECFGGRTWCEGTRHTACLSSPCLNGGTCHLIVATGTTVCACPPGFAGRLCNIEPDERCFLGNGTGYRGVASTSASGLSCLAWNSDLLYQELHVDSVGAAALLGLGPHAYCRNPDNDERPWCYVVKDSALSWEYCRLEACESLTRVQLSPDLLATLPEPASPGRQACGRRHKKRTFLRPRIIGGSSSLPGSHPWLAAIYIGDSFCAGSLVHTCWVVSAAHCFSHSPPRDSVSVVLGQHFFNRTTDVTQTFGIEKYIPYTLYSVFNPSDHDLVLIRLKKKGDRCATRSQFVQPICLPEPGSTFPAGHKCQIAGWGHLDENVSGYSSSLREALVPLVADHKCSSPEVYGADISPNMLCAGYFDCKSDACQGDSGGPLACEKNGVAYLYGIISWGDGCGRLHKPGVYTRVANYVDWINDRIRPPRRLVAPS.

A signal peptide spans 1-35; the sequence is MGRWAWVPSPWPPPGLGPFLLLLLLLLLLPRGFQP. Residues 36 to 372 constitute a propeptide, removed in mature form; it reads QPGGNRTESP…RLEACESLTR (337 aa). N-linked (GlcNAc...) asparagine glycosylation is found at asparagine 40 and asparagine 48. Positions 64–102 are disordered; that stretch reads TSETPATSAPEAEGPQSGGLPPPPRAVPSSSSPQAQALT. Residues 103–150 enclose the Fibronectin type-II domain; sequence EDGRPCRFPFRYGGRMLHACTSEGSAHRKWCATTHNYDRDRAWGYCVE. 19 disulfides stabilise this stretch: cysteine 108–cysteine 133, cysteine 122–cysteine 148, cysteine 164–cysteine 175, cysteine 169–cysteine 186, cysteine 188–cysteine 197, cysteine 202–cysteine 230, cysteine 228–cysteine 237, cysteine 245–cysteine 256, cysteine 250–cysteine 267, cysteine 269–cysteine 278, cysteine 286–cysteine 367, cysteine 307–cysteine 349, cysteine 338–cysteine 362, cysteine 394–cysteine 521, cysteine 432–cysteine 448, cysteine 440–cysteine 510, cysteine 535–cysteine 604, cysteine 567–cysteine 583, and cysteine 594–cysteine 622. The 39-residue stretch at 160-198 folds into the EGF-like 1 domain; the sequence is ALDPCASGPCLNGGSCSNTQDPQSYHCSCPRAFTGKDCG. Positions 200-240 constitute a Fibronectin type-I domain; the sequence is EKCFDETRYEYLEGGDRWARVRQGHVEQCECFGGRTWCEGT. The EGF-like 2 domain maps to 241-279; it reads RHTACLSSPCLNGGTCHLIVATGTTVCACPPGFAGRLCN. One can recognise a Kringle domain in the interval 286–367; sequence CFLGNGTGYR…SWEYCRLEAC (82 aa). Asparagine 290 carries an N-linked (GlcNAc...) asparagine glycan. Positions 408–646 constitute a Peptidase S1 domain; sequence IIGGSSSLPG…YVDWINDRIR (239 aa). Histidine 447 acts as the Charge relay system in catalysis. N-linked (GlcNAc...) asparagine glycosylation is found at asparagine 468 and asparagine 492. The active-site Charge relay system is aspartate 497. The N-linked (GlcNAc...) asparagine glycan is linked to asparagine 546. Catalysis depends on serine 598, which acts as the Charge relay system.

The protein belongs to the peptidase S1 family. Heterodimer of a short chain and a long chain linked by a disulfide bond. In terms of processing, the active form of HGFAC presents in the serum is derived from the COOH-terminal region of the precursor by the cleavage of bonds between Arg-372 and Val-373 and Arg-407 and Ile-408. Liver.

It is found in the secreted. Serine protease that hydrolyzes the inactive zymogen hepatocyte growth factor (HGFsc) to an activated disulfide-linked heterodimer, then initiating hepatocyte growth factor receptor signaling pathway. The protein is Hepatocyte growth factor activator serine protease of Homo sapiens (Human).